Here is a 316-residue protein sequence, read N- to C-terminus: Acetaldehyde dehydrogenase (316 aa).

An NAD(+)-binding site is contributed by 11–14 (SGNI). The Acyl-thioester intermediate role is filled by cysteine 131. NAD(+) is bound by residues 162–170 (SAGPGTRAN) and asparagine 289.

This sequence belongs to the acetaldehyde dehydrogenase family. As to quaternary structure, interacts with MhpE.

The catalysed reaction is acetaldehyde + NAD(+) + CoA = acetyl-CoA + NADH + H(+). Its pathway is aromatic compound metabolism; 3-phenylpropanoate degradation. In terms of biological role, catalyzes the conversion of acetaldehyde to acetyl-CoA, using NAD(+) and coenzyme A. Is the final enzyme in the meta-cleavage pathway for the degradation of aromatic compounds. In Escherichia coli O7:K1 (strain IAI39 / ExPEC), this protein is Acetaldehyde dehydrogenase.